The primary structure comprises 1343 residues: DNA-directed RNA polymerase subunit beta (1343 aa).

Belongs to the RNA polymerase beta chain family. As to quaternary structure, the RNAP catalytic core consists of 2 alpha, 1 beta, 1 beta' and 1 omega subunit. When a sigma factor is associated with the core the holoenzyme is formed, which can initiate transcription.

It carries out the reaction RNA(n) + a ribonucleoside 5'-triphosphate = RNA(n+1) + diphosphate. Its function is as follows. DNA-dependent RNA polymerase catalyzes the transcription of DNA into RNA using the four ribonucleoside triphosphates as substrates. This is DNA-directed RNA polymerase subunit beta from Shewanella sp. (strain W3-18-1).